Reading from the N-terminus, the 185-residue chain is Protein TIFY 5 (185 aa).

A Tify domain is found at 38-72; it reads AAEARRNLTIFYNGRMCAVNVTELQARTIISMASQ. The disordered stretch occupies residues 77-185; it reads KQQQQQIQGR…RAAAPLYARR (109 aa). Low complexity predominate over residues 137–157; the sequence is PRAGLQAAAAAAPTMNQPPAA. The short motif at 155–182 is the Jas element; it reads PAASGLSMKRSLQRFLEKRKTRAAAPLY. A Nuclear localization signal motif is present at residues 162–169; that stretch reads MKRSLQRF.

This sequence belongs to the TIFY/JAZ family. Ubiquitinated. Targeted for degradation by the SCF(COI1) E3 ubiquitin ligase-proteasome pathway during jasmonate signaling.

It is found in the nucleus. Functionally, repressor of jasmonate responses. In Oryza sativa subsp. indica (Rice), this protein is Protein TIFY 5.